An 874-amino-acid chain; its full sequence is Alanine--tRNA ligase (874 aa).

Zn(2+) contacts are provided by His-562, His-566, Cys-665, and His-669.

This sequence belongs to the class-II aminoacyl-tRNA synthetase family. Zn(2+) is required as a cofactor.

The protein resides in the cytoplasm. It catalyses the reaction tRNA(Ala) + L-alanine + ATP = L-alanyl-tRNA(Ala) + AMP + diphosphate. Catalyzes the attachment of alanine to tRNA(Ala) in a two-step reaction: alanine is first activated by ATP to form Ala-AMP and then transferred to the acceptor end of tRNA(Ala). Also edits incorrectly charged Ser-tRNA(Ala) and Gly-tRNA(Ala) via its editing domain. The polypeptide is Alanine--tRNA ligase (Pseudomonas syringae pv. tomato (strain ATCC BAA-871 / DC3000)).